A 456-amino-acid polypeptide reads, in one-letter code: MQVVSSFDFQSSPFSHGAGEILISPVDHRELSSHGDALEGACDDSTRLAAVKVQKVYRSYRTRRRLADSVVVAEELWWQAMDYARLNHSTISFFDYSRPETAVSRWNRVSLNASKVGKGLSIVDKAQKLAFQHWIEAIDPRHRYGHNLHKYYEEWCKADAGQPFFYWLDVGGGIDLDLNECPRSKLKQQCIRYLGPQEREEYEYVIIEGKIVHKLTGKFLHTMHGSEGTKWIFVMSTFKKLYAGLKKKGRFHHSSFLAGGATLAAGRVIVDNGVLKTISAYSGHYRPSDDSLDTFLGFLRENAVNLDNVEVHKASEDSDSYDDYVKSNGGSEPEPLKKEDTTFQAETETDENGNGTVGTLEEAKRSSYQRTLSGGLGSPKANVPQKSMLLRINSKKQSRSLQLGHQLSLKWSTGVGPRIGCAADYPVQLRTQALEFVNLSPKYRSSRLSPTGKLDV.

Residues 46–75 (TRLAAVKVQKVYRSYRTRRRLADSVVVAEE) form the IQ domain. The segment at 315–358 (SEDSDSYDDYVKSNGGSEPEPLKKEDTTFQAETETDENGNGTVG) is disordered.

Expressed in roots, rosette and cauline leaves, flowers and siliques, and at lower levels in stems.

The protein resides in the cytoplasm. It localises to the nucleus. Functionally, may be involved in biotic and abiotic stress responses. This is IQ domain-containing protein IQM3 from Arabidopsis thaliana (Mouse-ear cress).